We begin with the raw amino-acid sequence, 174 residues long: MSVSQARQNYHAESEAGINRQINMELYASYSYQSMAYYFDRDDVALPGFHKFFKHQSEEEREHAEKLMKYQNKRGGRIVLQDIKKPDRDEWGTGLEAMQVALQLEKSVNQSLLDLHKLCTSHDDAQMADFLESEFLEEQVKSIKELSDYITNLKRVGPGLGEYIFDKETLSSSS.

The Ferritin-like diiron domain maps to 8-157 (QNYHAESEAG…DYITNLKRVG (150 aa)). Residues Glu25, Glu60, His63, Glu105, and Gln139 each coordinate Fe cation.

The protein belongs to the ferritin family. Oligomer of 12 or 24 subunits. The functional molecule is roughly spherical and contains a central cavity into which the polymeric mineral iron core is deposited. As to expression, expressed in somatic tissues but not in oocytes.

The protein resides in the cytoplasm. It catalyses the reaction 4 Fe(2+) + O2 + 4 H(+) = 4 Fe(3+) + 2 H2O. In terms of biological role, stores iron in a soluble, non-toxic, readily available form. Important for iron homeostasis. Has ferroxidase activity. Iron is taken up in the ferrous form and deposited as ferric hydroxides after oxidation. The protein is Soma ferritin of Lymnaea stagnalis (Great pond snail).